We begin with the raw amino-acid sequence, 333 residues long: PDZ domain-containing protein GIPC1 (333 aa).

The span at 1 to 11 shows a compositional bias: basic residues; that stretch reads MPLGLGRRKKA. Residues 1–55 form a disordered region; it reads MPLGLGRRKKAPPLVENEEAEPSRSGLGVGEPGPLGGSGAGESQMGLPPPPASLR. Residues 27–40 show a composition bias toward gly residues; the sequence is LGVGEPGPLGGSGA. Serine 68 is subject to Phosphoserine. In terms of domain architecture, PDZ spans 133 to 213; that stretch reads EVEVFKSEDA…GRTFTLKLTE (81 aa). The tract at residues 221–244 is disordered; it reads ISQRSSGGHPGSGPQLGTGRGTLR. Phosphoserine is present on residues serine 222, serine 225, and serine 232. The segment covering 228-240 has biased composition (gly residues); it reads GHPGSGPQLGTGR. Residue threonine 242 is modified to Phosphothreonine. A Phosphoserine modification is found at serine 247.

This sequence belongs to the GIPC family. In terms of assembly, interacts with SDC4/syndecan-4 and SEMA4C/semaphorin-4C. Interacts with RGS19 (C-terminus), GLUT1 (C-terminus), ACTN1, KIF1B, MYO6 and PLEKHG5. Widely expressed.

Its subcellular location is the cytoplasm. The protein resides in the membrane. In terms of biological role, may be involved in G protein-linked signaling. This chain is PDZ domain-containing protein GIPC1 (Gipc1), found in Rattus norvegicus (Rat).